Here is a 291-residue protein sequence, read N- to C-terminus: Nucleotide-binding protein lwe2422 (291 aa).

13 to 20 (GMSGAGKT) is a binding site for ATP. 63-66 (DLRG) contacts GTP.

This sequence belongs to the RapZ-like family.

Functionally, displays ATPase and GTPase activities. In Listeria welshimeri serovar 6b (strain ATCC 35897 / DSM 20650 / CCUG 15529 / CIP 8149 / NCTC 11857 / SLCC 5334 / V8), this protein is Nucleotide-binding protein lwe2422.